A 744-amino-acid polypeptide reads, in one-letter code: Vesicle-fusing ATPase (744 aa).

Lys-105 is modified (N6-acetyllysine). Phosphoserine is present on Ser-207. Position 259 is a phosphotyrosine (Tyr-259). Residues 505 to 510 (NGIIKW) and 545 to 552 (PHSGKTAL) contribute to the ATP site. Thr-550 is a Mg(2+) binding site. Ser-569 is subject to Phosphoserine; by CDK16.

This sequence belongs to the AAA ATPase family. As to quaternary structure, homohexamer. Interacts with GABARAP and GABARAPL2. Interacts with GRIA2. Interacts with PLK2, leading to disrupt the interaction with GRIA2. Interacts with MUSK; may regulate MUSK endocytosis and activity. Interacts with CDK16. Mg(2+) is required as a cofactor. Post-translationally, phosphorylation at Ser-569 interferes with homohexamerization. As to expression, detected in brain (at protein level).

The protein localises to the cytoplasm. It catalyses the reaction ATP + H2O = ADP + phosphate + H(+). Required for vesicle-mediated transport. Catalyzes the fusion of transport vesicles within the Golgi cisternae. Is also required for transport from the endoplasmic reticulum to the Golgi stack. Seems to function as a fusion protein required for the delivery of cargo proteins to all compartments of the Golgi stack independent of vesicle origin. Interaction with AMPAR subunit GRIA2 leads to influence GRIA2 membrane cycling. This chain is Vesicle-fusing ATPase (Nsf), found in Rattus norvegicus (Rat).